The chain runs to 466 residues: Cysteine--tRNA ligase 1 (466 aa).

Position 27 (Cys27) interacts with Zn(2+). The short motif at 29 to 39 (PTVQSPPHIGH) is the 'HIGH' region element. Residues Cys211, His236, and Glu240 each contribute to the Zn(2+) site. The short motif at 267–271 (KMSKS) is the 'KMSKS' region element. Lys270 lines the ATP pocket.

Belongs to the class-I aminoacyl-tRNA synthetase family. Monomer. It depends on Zn(2+) as a cofactor.

The protein resides in the cytoplasm. The catalysed reaction is tRNA(Cys) + L-cysteine + ATP = L-cysteinyl-tRNA(Cys) + AMP + diphosphate. In Tropheryma whipplei (strain TW08/27) (Whipple's bacillus), this protein is Cysteine--tRNA ligase 1.